The primary structure comprises 189 residues: Adenylate kinase (189 aa).

Position 10-15 (10-15 (GAGKGT)) interacts with ATP. Residues 30 to 59 (STGDIFRANVSGGTELGKKAQAYMDRGDLV) are NMP. Residues threonine 31, arginine 36, 57–59 (DLV), 85–88 (GFPR), and glutamine 92 each bind AMP. The LID stretch occupies residues 126–136 (ERARIDNRSDD). Arginine 127 contacts ATP. AMP is bound by residues arginine 133 and arginine 144. Glycine 172 is an ATP binding site.

It belongs to the adenylate kinase family. As to quaternary structure, monomer.

The protein resides in the cytoplasm. The enzyme catalyses AMP + ATP = 2 ADP. It participates in purine metabolism; AMP biosynthesis via salvage pathway; AMP from ADP: step 1/1. Catalyzes the reversible transfer of the terminal phosphate group between ATP and AMP. Plays an important role in cellular energy homeostasis and in adenine nucleotide metabolism. The chain is Adenylate kinase from Thermobifida fusca (strain YX).